The sequence spans 151 residues: Ribonuclease H (151 aa).

Positions 5–146 constitute an RNase H type-1 domain; the sequence is ALPHVTIFTD…ADQLAREGVA (142 aa). Mg(2+) is bound by residues aspartate 14, glutamate 52, aspartate 74, and aspartate 138.

It belongs to the RNase H family. In terms of assembly, monomer. Mg(2+) serves as cofactor.

The protein localises to the cytoplasm. The catalysed reaction is Endonucleolytic cleavage to 5'-phosphomonoester.. Endonuclease that specifically degrades the RNA of RNA-DNA hybrids. This chain is Ribonuclease H, found in Nitrobacter hamburgensis (strain DSM 10229 / NCIMB 13809 / X14).